The primary structure comprises 406 residues: Trk system potassium uptake protein trkA homolog 1 (406 aa).

Positions 1 to 124 (MKAVIIGAGE…RAQVGVDLMI (124 aa)) constitute an RCK N-terminal 1 domain. NAD(+)-binding positions include 7 to 11 (GAGEV), D29, 70 to 71 (TG), and R101. In terms of domain architecture, RCK C-terminal spans 144–225 (IDAEMFAEGK…MEDLESVFGS (82 aa)). The region spanning 230-348 (RTRILLIGCG…FEMVGIDMAV (119 aa)) is the RCK N-terminal 2 domain. NAD(+) is bound at residue 232–262 (RILLIGCGIVGMYLAKLIDKEENADLRIIEH).

In terms of biological role, part of a potassium transport system. This is Trk system potassium uptake protein trkA homolog 1 (trkA1) from Methanosarcina mazei (Methanosarcina frisia).